A 782-amino-acid chain; its full sequence is Cadherin-5 (782 aa).

A signal peptide spans 1-22 (MQVLVMLLAAAGTYLGLLTAPT). Residues 23 to 44 (AASNPGRQDTPSTLPLHRRQKR) constitute a propeptide that is removed on maturation. 5 consecutive Cadherin domains span residues 45-148 (DWIW…WPVF), 149-255 (TQLV…FPVF), 256-370 (TQTR…PPNF), 371-475 (KQPF…DNAP), and 476-592 (EFAK…MGAQ). At 45 to 598 (DWIWNQMHID…MGAQVGVSIQ (554 aa)) the chain is on the extracellular side. Ca(2+) contacts are provided by Glu55 and Glu56. Asn58 carries an N-linked (GlcNAc...) asparagine glycan. Residues Asp106, Glu108, Asp140, Ile141, Asn142, Asp143, and Asn144 each coordinate Ca(2+). An N-linked (GlcNAc...) asparagine glycan is attached at Asn154. 4 residues coordinate Ca(2+): Asp174, Asp176, His183, and Asp228. Residues Asn360, Asn440, Asn522, and Asn534 are each glycosylated (N-linked (GlcNAc...) asparagine). A helical membrane pass occupies residues 599–619 (ALVAIFLCILTIAVISLLVYL). Positions 620–659 (RRRLRKQARAHGKSVPEIHEQLVTYDEEGGGEMDTTSYDV) are required for interaction with PALS1. The Cytoplasmic segment spans residues 620 to 782 (RRRLRKQARA…GSDPREELLY (163 aa)).

In terms of assembly, part of a complex composed of AMOTL2, MAGI1 and CDH5, within the complex AMOTL2 acts as a scaffold protein for the interaction of MAGI1 with CDH5. The complex is required for coupling actin fibers to cell junctions in endothelial cells. Within the complex AMOTL2 (via its N-terminus) interacts with CDH5. Interacts (via cadherin 5 domain) with PTPRB. Interacts with TRPC4. Interacts with KRIT1. Interacts with PARD3. Interacts with RTN4 (isoform B). Interacts with PALS1; the interaction promotes PALS1 localization to cell junctions and is required for CDH5-mediated vascular lumen formation and endothelial cell. Interacts with CTNND1/p120-catenin; the interaction controls CADH5 endocytosis. Phosphorylated on tyrosine residues by KDR/VEGFR-2. Dephosphorylated by PTPRB. In terms of processing, O-glycosylated.

It is found in the cell junction. The protein resides in the adherens junction. It localises to the cell membrane. Its subcellular location is the cytoplasm. In terms of biological role, cadherins are calcium-dependent cell adhesion proteins. They preferentially interact with themselves in a homophilic manner in connecting cells; cadherins may thus contribute to the sorting of heterogeneous cell types. This cadherin may play a important role in endothelial cell biology through control of the cohesion and organization of the intercellular junctions. It associates with alpha-catenin forming a link to the cytoskeleton. Plays a role in coupling actin fibers to cell junctions in endothelial cells, via acting as a cell junctional complex anchor for AMOTL2 and MAGI1. Acts in concert with KRIT1 and PALS1 to establish and maintain correct endothelial cell polarity and vascular lumen. These effects are mediated by recruitment and activation of the Par polarity complex and RAP1B. Required for activation of PRKCZ and for localization of phosphorylated PRKCZ, PARD3, TIAM1 and RAP1B to the cell junction. Associates with CTNND1/p120-catenin to control CADH5 endocytosis. The polypeptide is Cadherin-5 (Sus scrofa (Pig)).